The primary structure comprises 236 residues: Small ribosomal subunit protein uS2c (236 aa).

It belongs to the universal ribosomal protein uS2 family.

The protein resides in the plastid. It is found in the chloroplast. This Ipomoea purpurea (Common morning glory) protein is Small ribosomal subunit protein uS2c (rps2).